Reading from the N-terminus, the 230-residue chain is Ribonuclease 3 (230 aa).

Residues 1–134 enclose the RNase III domain; it reads MKQLEELLST…FLGALLLDKG (134 aa). Glu47 is a Mg(2+) binding site. Residue Asp51 is part of the active site. Mg(2+) contacts are provided by Asp120 and Glu123. Glu123 is a catalytic residue. In terms of domain architecture, DRBM spans 160–229; the sequence is DYKTCLQEFL…AKNALAQLSE (70 aa).

This sequence belongs to the ribonuclease III family. Homodimer. Mg(2+) serves as cofactor.

The protein localises to the cytoplasm. The enzyme catalyses Endonucleolytic cleavage to 5'-phosphomonoester.. Functionally, digests double-stranded RNA. Involved in the processing of primary rRNA transcript to yield the immediate precursors to the large and small rRNAs (23S and 16S). Processes some mRNAs, and tRNAs when they are encoded in the rRNA operon. Processes pre-crRNA and tracrRNA of type II CRISPR loci if present in the organism. The polypeptide is Ribonuclease 3 (Streptococcus pyogenes serotype M49 (strain NZ131)).